The sequence spans 188 residues: Elongation factor P-like protein (188 aa).

Belongs to the elongation factor P family.

The protein is Elongation factor P-like protein of Vibrio vulnificus (strain CMCP6).